The sequence spans 205 residues: Holliday junction branch migration complex subunit RuvA (205 aa).

The domain I stretch occupies residues 1-64; it reads MIGRLRGIIL…EDAQLLFGFI (64 aa). The tract at residues 65–143 is domain II; it reads HKQERVLFRE…GLSGDLFVPQ (79 aa). Residues 144-156 form a flexible linker region; it reads GAGEIPAAIDAPA. The domain III stretch occupies residues 157-205; the sequence is MPADPEGEAVAALVALGYKPQEASRMVSKVASAGSDCEMLIRDALRAAL.

This sequence belongs to the RuvA family. As to quaternary structure, homotetramer. Forms an RuvA(8)-RuvB(12)-Holliday junction (HJ) complex. HJ DNA is sandwiched between 2 RuvA tetramers; dsDNA enters through RuvA and exits via RuvB. An RuvB hexamer assembles on each DNA strand where it exits the tetramer. Each RuvB hexamer is contacted by two RuvA subunits (via domain III) on 2 adjacent RuvB subunits; this complex drives branch migration. In the full resolvosome a probable DNA-RuvA(4)-RuvB(12)-RuvC(2) complex forms which resolves the HJ.

It localises to the cytoplasm. Functionally, the RuvA-RuvB-RuvC complex processes Holliday junction (HJ) DNA during genetic recombination and DNA repair, while the RuvA-RuvB complex plays an important role in the rescue of blocked DNA replication forks via replication fork reversal (RFR). RuvA specifically binds to HJ cruciform DNA, conferring on it an open structure. The RuvB hexamer acts as an ATP-dependent pump, pulling dsDNA into and through the RuvAB complex. HJ branch migration allows RuvC to scan DNA until it finds its consensus sequence, where it cleaves and resolves the cruciform DNA. The sequence is that of Holliday junction branch migration complex subunit RuvA from Sodalis glossinidius (strain morsitans).